We begin with the raw amino-acid sequence, 114 residues long: METIEGIIVVTTSEIPGYRIVEVKGIARGGVVRATHLGRDIMALLRNIKGGEVKEYTEMMAEAREEALRRMALHAKELGANAVVNMRFATSNLGGSMAEIYAYGTAVVIEREEK.

The protein belongs to the UPF0145 family.

This chain is UPF0145 protein PYRAB04900, found in Pyrococcus abyssi (strain GE5 / Orsay).